Consider the following 475-residue polypeptide: Na(+)/H(+) antiporter NhaA 2 (475 aa).

Transmembrane regions (helical) follow at residues 44 to 64 (AQATASVFLLVATITALWWAN), 92 to 112 (LKHIINDGLMVIFFFFIGLEI), 130 to 150 (LILCALGGMICPAVIYSLFNW), 156 to 176 (IGWGIPMATDTAFALGALTLV), 186 to 206 (AFLVGLAIVDDVGAIVVIALF), 211 to 231 (ISVIFLSISFSLIAFLAIANY), 232 to 252 (AGVLRPIFYILIGIAAWWTML), 255 to 275 (GVHPTFAGVAIALTVPARPML), 331 to 351 (ALDLPVSLFVLPLFALVNAGV), 368 to 388 (LGIVIGLVIGKFVGISGACWL), 406 to 426 (VIGMSLIAGIGFTMSTFIATL), and 442 to 462 (ILFASLLSAILGLLYLRIIAA).

The protein belongs to the NhaA Na(+)/H(+) (TC 2.A.33) antiporter family.

Its subcellular location is the cell inner membrane. The enzyme catalyses Na(+)(in) + 2 H(+)(out) = Na(+)(out) + 2 H(+)(in). Its function is as follows. Na(+)/H(+) antiporter that extrudes sodium in exchange for external protons. In Psychromonas ingrahamii (strain DSM 17664 / CCUG 51855 / 37), this protein is Na(+)/H(+) antiporter NhaA 2.